Here is a 227-residue protein sequence, read N- to C-terminus: uncharacterized protein (227 aa).

The next 3 helical transmembrane spans lie at 109–128 (MCNV…FAGI), 173–192 (AILL…ILLT), and 199–221 (ALRV…VMMG).

It localises to the cell membrane. This is an uncharacterized protein from Archaeoglobus fulgidus (strain ATCC 49558 / DSM 4304 / JCM 9628 / NBRC 100126 / VC-16).